Reading from the N-terminus, the 243-residue chain is Zinc import ATP-binding protein ZnuC (243 aa).

The region spanning 4 to 219 (ITVENLSVRY…PEYRALFGTG (216 aa)) is the ABC transporter domain. ATP is bound at residue 36-43 (GPNGSGKT).

Belongs to the ABC transporter superfamily. Zinc importer (TC 3.A.1.15.5) family. In terms of assembly, the complex is composed of two ATP-binding proteins (ZnuC), two transmembrane proteins (ZnuB) and a solute-binding protein (ZnuA).

The protein resides in the cell inner membrane. The enzyme catalyses Zn(2+)(out) + ATP(in) + H2O(in) = Zn(2+)(in) + ADP(in) + phosphate(in) + H(+)(in). Part of the ABC transporter complex ZnuABC involved in zinc import. Responsible for energy coupling to the transport system. The protein is Zinc import ATP-binding protein ZnuC of Jannaschia sp. (strain CCS1).